We begin with the raw amino-acid sequence, 111 residues long: Cytochrome c oxidase subunit 6A1, mitochondrial (111 aa).

The transit peptide at 1–26 (MASAVLSASRVSGLLGRALPRVGRPM) directs the protein to the mitochondrion. Residues 27 to 36 (SSGAHGEEGS) lie on the Mitochondrial matrix side of the membrane. A helical transmembrane segment spans residues 37–61 (ARIWKALTYFVALPGVGVSMLNVFL). Residues 62–111 (KSRHEEHERPEFVAYPHLRIRTKPFPWGDGNHTLFHNPHMNPLPTGYEDE) lie on the Mitochondrial intermembrane side of the membrane.

Belongs to the cytochrome c oxidase subunit 6A family. In terms of assembly, component of the cytochrome c oxidase (complex IV, CIV), a multisubunit enzyme composed of 14 subunits. The complex is composed of a catalytic core of 3 subunits MT-CO1, MT-CO2 and MT-CO3, encoded in the mitochondrial DNA, and 11 supernumerary subunits COX4I, COX5A, COX5B, COX6A, COX6B, COX6C, COX7A, COX7B, COX7C, COX8 and NDUFA4, which are encoded in the nuclear genome. The complex exists as a monomer or a dimer and forms supercomplexes (SCs) in the inner mitochondrial membrane with NADH-ubiquinone oxidoreductase (complex I, CI) and ubiquinol-cytochrome c oxidoreductase (cytochrome b-c1 complex, complex III, CIII), resulting in different assemblies (supercomplex SCI(1)III(2)IV(1) and megacomplex MCI(2)III(2)IV(2)).

It localises to the mitochondrion inner membrane. It participates in energy metabolism; oxidative phosphorylation. Component of the cytochrome c oxidase, the last enzyme in the mitochondrial electron transport chain which drives oxidative phosphorylation. The respiratory chain contains 3 multisubunit complexes succinate dehydrogenase (complex II, CII), ubiquinol-cytochrome c oxidoreductase (cytochrome b-c1 complex, complex III, CIII) and cytochrome c oxidase (complex IV, CIV), that cooperate to transfer electrons derived from NADH and succinate to molecular oxygen, creating an electrochemical gradient over the inner membrane that drives transmembrane transport and the ATP synthase. Cytochrome c oxidase is the component of the respiratory chain that catalyzes the reduction of oxygen to water. Electrons originating from reduced cytochrome c in the intermembrane space (IMS) are transferred via the dinuclear copper A center (CU(A)) of subunit 2 and heme A of subunit 1 to the active site in subunit 1, a binuclear center (BNC) formed by heme A3 and copper B (CU(B)). The BNC reduces molecular oxygen to 2 water molecules unsing 4 electrons from cytochrome c in the IMS and 4 protons from the mitochondrial matrix. The sequence is that of Cytochrome c oxidase subunit 6A1, mitochondrial (Cox6a1) from Rattus norvegicus (Rat).